Here is a 263-residue protein sequence, read N- to C-terminus: Type III pantothenate kinase (263 aa).

Residue 14–21 (DIGNTSVN) coordinates ATP. Residue 115 to 118 (GADR) coordinates substrate. Aspartate 117 acts as the Proton acceptor in catalysis. A K(+)-binding site is contributed by aspartate 137. Residue threonine 140 coordinates ATP. Residue threonine 192 coordinates substrate.

Belongs to the type III pantothenate kinase family. Homodimer. NH4(+) is required as a cofactor. It depends on K(+) as a cofactor.

Its subcellular location is the cytoplasm. The enzyme catalyses (R)-pantothenate + ATP = (R)-4'-phosphopantothenate + ADP + H(+). Its pathway is cofactor biosynthesis; coenzyme A biosynthesis; CoA from (R)-pantothenate: step 1/5. Functionally, catalyzes the phosphorylation of pantothenate (Pan), the first step in CoA biosynthesis. The chain is Type III pantothenate kinase from Dehalococcoides mccartyi (strain ATCC BAA-2100 / JCM 16839 / KCTC 5957 / BAV1).